Here is a 309-residue protein sequence, read N- to C-terminus: Homoserine O-acetyltransferase (309 aa).

The Acyl-thioester intermediate role is filled by C142. Positions 163 and 192 each coordinate substrate. H235 acts as the Proton acceptor in catalysis. E237 is an active-site residue. R249 is a binding site for substrate.

It belongs to the MetA family.

The protein resides in the cytoplasm. It catalyses the reaction L-homoserine + acetyl-CoA = O-acetyl-L-homoserine + CoA. The protein operates within amino-acid biosynthesis; L-methionine biosynthesis via de novo pathway; O-acetyl-L-homoserine from L-homoserine: step 1/1. Its function is as follows. Transfers an acetyl group from acetyl-CoA to L-homoserine, forming acetyl-L-homoserine. The sequence is that of Homoserine O-acetyltransferase from Petrotoga mobilis (strain DSM 10674 / SJ95).